Here is a 187-residue protein sequence, read N- to C-terminus: UPF0200 protein MA_4660 (187 aa).

Residue 9-16 participates in ATP binding; the sequence is GMPASGKS.

The protein belongs to the UPF0200 family.

In Methanosarcina acetivorans (strain ATCC 35395 / DSM 2834 / JCM 12185 / C2A), this protein is UPF0200 protein MA_4660.